Consider the following 185-residue polypeptide: Large ribosomal subunit protein uL5m (185 aa).

The protein belongs to the universal ribosomal protein uL5 family. In terms of assembly, component of the mitochondrial ribosome large subunit.

Its subcellular location is the mitochondrion. The chain is Large ribosomal subunit protein uL5m (RPL5) from Arabidopsis thaliana (Mouse-ear cress).